The chain runs to 177 residues: uncharacterized protein (177 aa).

Residues 10–177 (LILRQITDQD…NVYSIVKPRE (168 aa)) enclose the N-acetyltransferase domain.

This sequence belongs to the acetyltransferase family.

This is an uncharacterized protein from Bacillus subtilis (strain 168).